Consider the following 284-residue polypeptide: Tropomyosin Per a 7.0103 (284 aa).

Residues 1–266 (MDAIKKKMQA…EDELVHEKEK (266 aa)) are a coiled coil.

Belongs to the tropomyosin family. In terms of assembly, homodimer.

In terms of biological role, tropomyosin, in association with the troponin complex, plays a central role in the calcium dependent regulation of muscle contraction. The sequence is that of Tropomyosin Per a 7.0103 from Periplaneta americana (American cockroach).